A 917-amino-acid chain; its full sequence is MLX-interacting protein (917 aa).

Positions 1–72 (MAADVFMCSP…AGPGREEPPR (72 aa)) are disordered. The residue at position 2 (alanine 2) is an N-acetylalanine. Serine 9, serine 33, and serine 39 each carry phosphoserine. Residues 27–37 (PEDDDDSDTDE) show a composition bias toward acidic residues. Low complexity predominate over residues 47 to 57 (ATSARAHASAA). Residues 73–327 (RQQIIHSGHF…PLQPNLDFMD (255 aa)) are required for cytoplasmic localization. Residues 322–445 (NLDFMDTFEP…LLSPGPAPAP (124 aa)) are transactivation domain. 2 disordered regions span residues 347–402 (LPPP…CERT) and 632–711 (SHST…TDPK). The segment covering 378-388 (LPNSLITSSAA) has biased composition (polar residues). The segment covering 632 to 643 (SHSTSSQPSPVS) has biased composition (low complexity). Serine 667 bears the Phosphoserine mark. The segment covering 670 to 685 (VPATGSSRDCPNSGQA) has biased composition (polar residues). Positions 686–704 (SPCPSEQSPSPQSPQNNCS) are enriched in low complexity. One can recognise a bHLH domain in the interval 717–767 (KNRQKHISAEQKRRFNIRMGFNTLNSLISNNSKQTSHAITLQKTMEYITKL). The interval 767-788 (LQQERMQMQEEARRLREEIEEL) is leucine-zipper. Positions 830-879 (WKFWIFSMIIKPLFESFKGMVSTSSLEEFHRTALSWLDQHCSLPVLRPMV) are mediates heterotypic interactions between MLXIP and MLX and is required for cytoplasmic localization. The interval 897–917 (SQLPEQASEAVTRMGKRSGES) is disordered.

Efficient DNA binding requires dimerization with another bHLH protein. Binds DNA as a homodimer or a heterodimer with MLX/TCFL4.

It localises to the cytoplasm. Its subcellular location is the nucleus. The protein localises to the mitochondrion outer membrane. Its function is as follows. Binds DNA as a heterodimer with MLX/TCFL4 and activates transcription. Binds to the canonical E box sequence 5'-CACGTG-3'. Plays a role in transcriptional activation of glycolytic target genes. Involved in glucose-responsive gene regulation. Regulates transcription in response to changes in cellular carbohydrate abundance such as occurs during fasting to feeding metabolic transition. Refeeding stimulates MLXIPL/ChREBP transcription factor, leading to increased BCKDK to PPM1K expression ratio, phosphorylation and activation of ACLY that ultimately results in the generation of malonyl-CoA and oxaloacetate immediate substrates of de novo lipogenesis and gluconeogenesis, respectively. In Mus musculus (Mouse), this protein is MLX-interacting protein.